Consider the following 421-residue polypeptide: UDP-N-acetylglucosamine 1-carboxyvinyltransferase (421 aa).

A phosphoenolpyruvate-binding site is contributed by 22-23 (KN). Arg92 provides a ligand contact to UDP-N-acetyl-alpha-D-glucosamine. Residue Cys116 is the Proton donor of the active site. Position 116 is a 2-(S-cysteinyl)pyruvic acid O-phosphothioketal (Cys116). The UDP-N-acetyl-alpha-D-glucosamine site is built by Asp307 and Val329.

It belongs to the EPSP synthase family. MurA subfamily.

The protein resides in the cytoplasm. It carries out the reaction phosphoenolpyruvate + UDP-N-acetyl-alpha-D-glucosamine = UDP-N-acetyl-3-O-(1-carboxyvinyl)-alpha-D-glucosamine + phosphate. It participates in cell wall biogenesis; peptidoglycan biosynthesis. Its function is as follows. Cell wall formation. Adds enolpyruvyl to UDP-N-acetylglucosamine. The protein is UDP-N-acetylglucosamine 1-carboxyvinyltransferase of Kosmotoga olearia (strain ATCC BAA-1733 / DSM 21960 / TBF 19.5.1).